We begin with the raw amino-acid sequence, 517 residues long: Ribose import ATP-binding protein RbsA (517 aa).

2 ABC transporter domains span residues 11-251 (LEMR…VGRD) and 263-507 (YDPG…ALAT). 43–50 (GENGAGKS) contributes to the ATP binding site.

Belongs to the ABC transporter superfamily. Ribose importer (TC 3.A.1.2.1) family. As to quaternary structure, the complex is composed of an ATP-binding protein (RbsA), two transmembrane proteins (RbsC) and a solute-binding protein (RbsB).

The protein localises to the cell inner membrane. It catalyses the reaction D-ribose(out) + ATP + H2O = D-ribose(in) + ADP + phosphate + H(+). Its function is as follows. Part of the ABC transporter complex RbsABC involved in ribose import. Responsible for energy coupling to the transport system. In Burkholderia pseudomallei (strain K96243), this protein is Ribose import ATP-binding protein RbsA.